The chain runs to 261 residues: Zinc finger protein 664 (261 aa).

C2H2-type zinc fingers lie at residues 3–25 (YKCP…QKVH), 31–53 (HKCD…WRDH), 59–81 (YKCD…KKIH), 87–109 (YKCY…MRVH), 115–137 (YVCS…QRVH), 143–165 (FKCE…QRVH), 171–193 (YKCY…QRVH), 199–221 (YRCC…QRVH), and 227–249 (FKCD…QRVH). A Glycyl lysine isopeptide (Lys-Gly) (interchain with G-Cter in SUMO2) cross-link involves residue K257.

This sequence belongs to the krueppel C2H2-type zinc-finger protein family. As to expression, expressed in the organ of Corti, stria vascularis, auditory nerve and retina. Lower levels in the tongue, cerebellum, small intestine and kidney.

Its subcellular location is the nucleus. Functionally, may be involved in transcriptional regulation. The sequence is that of Zinc finger protein 664 (ZNF664) from Cavia porcellus (Guinea pig).